Reading from the N-terminus, the 417-residue chain is Tyrosine--tRNA ligase (417 aa).

Position 34 (tyrosine 34) interacts with L-tyrosine. Positions 39 to 48 (PTGDSMHIGH) match the 'HIGH' region motif. L-tyrosine-binding residues include tyrosine 165 and glutamine 169. A 'KMSKS' region motif is present at residues 227 to 231 (KFGKS). Position 230 (lysine 230) interacts with ATP. The region spanning 349–417 (ENIVLWLVDT…KKKYFLARVK (69 aa)) is the S4 RNA-binding domain.

The protein belongs to the class-I aminoacyl-tRNA synthetase family. TyrS type 1 subfamily. Homodimer.

Its subcellular location is the cytoplasm. The enzyme catalyses tRNA(Tyr) + L-tyrosine + ATP = L-tyrosyl-tRNA(Tyr) + AMP + diphosphate + H(+). Functionally, catalyzes the attachment of tyrosine to tRNA(Tyr) in a two-step reaction: tyrosine is first activated by ATP to form Tyr-AMP and then transferred to the acceptor end of tRNA(Tyr). This Pediococcus pentosaceus (strain ATCC 25745 / CCUG 21536 / LMG 10740 / 183-1w) protein is Tyrosine--tRNA ligase.